Here is a 67-residue protein sequence, read N- to C-terminus: Small, acid-soluble spore protein B (67 aa).

It belongs to the alpha/beta-type SASP family.

Functionally, SASP are bound to spore DNA. They are double-stranded DNA-binding proteins that cause DNA to change to an a-like conformation. They protect the DNA backbone from chemical and enzymatic cleavage and are thus involved in dormant spore's high resistance to UV light. The chain is Small, acid-soluble spore protein B (sspB) from Bacillus subtilis (strain 168).